Reading from the N-terminus, the 255-residue chain is Probable transcriptional regulator ycf27 (255 aa).

The Response regulatory domain occupies 9–122 (KILIADDESS…ELEARIRCVL (114 aa)). Asp58 is modified (4-aspartylphosphate). A DNA-binding region (H-T-H motif) is located at residues 78–96 (DIPIIMLTALGDVTDRITG). The ompR/PhoB-type DNA-binding region spans 137–238 (SGIINIGFLK…SRGTGYLFQR (102 aa)).

It localises to the plastid. The protein resides in the chloroplast. In terms of biological role, probable promoter-specific protein mediating the interaction between DNA and RNA polymerase. The protein is Probable transcriptional regulator ycf27 (ycf27) of Galdieria sulphuraria (Red alga).